A 415-amino-acid polypeptide reads, in one-letter code: Transcription factor gsfR2 (415 aa).

The zn(2)-C6 fungal-type DNA-binding region spans 9–36 (CITCVQSKRKCDQGLPKCQRCLAKNIHC). A disordered region spans residues 65–91 (AEEPSRGCQLQRSPARPTSPTHSPHAN). Positions 72–88 (CQLQRSPARPTSPTHSP) are enriched in polar residues.

Its subcellular location is the nucleus. Transcription factor that regulates expression of the gene cluster that mediates the biosynthesis of Griseofulvin, an important antifungal drug that has been in use for a long time for treating dermatophyte infections. The sequence is that of Transcription factor gsfR2 from Penicillium aethiopicum.